A 465-amino-acid chain; its full sequence is Iron-sulfur cluster assembly SufBD family protein SAUSA300_0822 (465 aa).

Belongs to the iron-sulfur cluster assembly SufBD family.

The chain is Iron-sulfur cluster assembly SufBD family protein SAUSA300_0822 from Staphylococcus aureus (strain USA300).